A 340-amino-acid polypeptide reads, in one-letter code: Dihydroorotate dehydrogenase (quinone) (340 aa).

Residues 67-71 (AGFDK) and Thr91 each bind FMN. Position 71 (Lys71) interacts with substrate. 116 to 120 (NRMGF) is a substrate binding site. Asn143 and Asn176 together coordinate FMN. Asn176 provides a ligand contact to substrate. Ser179 serves as the catalytic Nucleophile. Asn181 contacts substrate. FMN-binding residues include Lys217 and Thr245. Substrate is bound at residue 246-247 (NT). FMN is bound by residues Gly267, Gly296, and 317–318 (YT).

This sequence belongs to the dihydroorotate dehydrogenase family. Type 2 subfamily. In terms of assembly, monomer. FMN serves as cofactor.

The protein resides in the cell membrane. It catalyses the reaction (S)-dihydroorotate + a quinone = orotate + a quinol. Its pathway is pyrimidine metabolism; UMP biosynthesis via de novo pathway; orotate from (S)-dihydroorotate (quinone route): step 1/1. In terms of biological role, catalyzes the conversion of dihydroorotate to orotate with quinone as electron acceptor. This chain is Dihydroorotate dehydrogenase (quinone), found in Christiangramia forsetii (strain DSM 17595 / CGMCC 1.15422 / KT0803) (Gramella forsetii).